Reading from the N-terminus, the 924-residue chain is Protein translocase subunit SecA (924 aa).

Residues glutamine 87, 105-109 (GEGKT), and aspartate 517 contribute to the ATP site. Residues 886–906 (VPAADRDPNDPSTWGKVGRNE) are disordered. 4 residues coordinate Zn(2+): cysteine 908, cysteine 910, cysteine 919, and histidine 920.

It belongs to the SecA family. In terms of assembly, monomer and homodimer. Part of the essential Sec protein translocation apparatus which comprises SecA, SecYEG and auxiliary proteins SecDF-YajC and YidC. Zn(2+) serves as cofactor.

It is found in the cell inner membrane. It localises to the cytoplasm. The catalysed reaction is ATP + H2O + cellular proteinSide 1 = ADP + phosphate + cellular proteinSide 2.. Functionally, part of the Sec protein translocase complex. Interacts with the SecYEG preprotein conducting channel. Has a central role in coupling the hydrolysis of ATP to the transfer of proteins into and across the cell membrane, serving both as a receptor for the preprotein-SecB complex and as an ATP-driven molecular motor driving the stepwise translocation of polypeptide chains across the membrane. The chain is Protein translocase subunit SecA from Azorhizobium caulinodans (strain ATCC 43989 / DSM 5975 / JCM 20966 / LMG 6465 / NBRC 14845 / NCIMB 13405 / ORS 571).